The following is a 699-amino-acid chain: D-(-)-3-hydroxybutyrate oligomer hydrolase (699 aa).

The first 33 residues, 1–33 (MTAIRGGSRRAPGLALALLGGVLLGACHGDENA), serve as a signal peptide directing secretion. Ser-311 functions as the Charge relay system in the catalytic mechanism.

It belongs to the D-(-)-3-hydroxybutyrate oligomer hydrolase family.

It localises to the secreted. It carries out the reaction (3R)-hydroxybutanoate dimer + H2O = 2 (R)-3-hydroxybutanoate + H(+). It participates in lipid metabolism; butanoate metabolism. Participates in the degradation of poly-3-hydroxybutyrate (PHB). It works downstream of poly(3-hydroxybutyrate) depolymerase, hydrolyzing D(-)-3-hydroxybutyrate oligomers of various length (3HB-oligomers) into 3HB-monomers. The chain is D-(-)-3-hydroxybutyrate oligomer hydrolase from Burkholderia mallei (strain NCTC 10247).